The chain runs to 304 residues: Killer cell immunoglobulin-like receptor 2DS4 (304 aa).

Positions 1–21 are cleaved as a signal peptide; the sequence is MSLMVIIMACVGFFLLQGAWP. The Extracellular portion of the chain corresponds to 22–245; sequence QEGVHRKPSF…SKTGNPRHLH (224 aa). Ig-like C2-type domains are found at residues 42-107 and 142-205; these read EETV…VPHS and GENV…FRDA. Residues Cys49 and Cys100 are joined by a disulfide bond. N-linked (GlcNAc...) asparagine glycans are attached at residues Asn67, Asn84, Asn144, Asn178, and Asn211. A disulfide bridge connects residues Cys149 and Cys198. Positions 220–239 are disordered; it reads VTGNPSNSWPSPTEPSSKTG. Residues 246-265 form a helical membrane-spanning segment; sequence VLIGTSVVKIPFTILLFFLL. Residues 266–304 are Cytoplasmic-facing; the sequence is HRWCSDKKNAAVMDQEPAGNRTVNSEDSDEQDHQEVSYA. The interval 280–304 is disordered; that stretch reads QEPAGNRTVNSEDSDEQDHQEVSYA.

Belongs to the immunoglobulin superfamily. In terms of assembly, interacts with HLA-F; this interaction is direct.

It is found in the cell membrane. In terms of biological role, receptor on natural killer (NK) cells for HLA-C alleles. Does not inhibit the activity of NK cells. The polypeptide is Killer cell immunoglobulin-like receptor 2DS4 (Homo sapiens (Human)).